Reading from the N-terminus, the 152-residue chain is Natriuretic peptides A (152 aa).

Positions 1 to 24 (MGSSAITVSFLLFLAFQLPGQTGA) are cleaved as a signal peptide. 2 propeptides span residues 25 to 122 (NPVY…TAPR) and 92 to 102 (EGGVLGRGPWE). The disordered stretch occupies residues 58–101 (PSQVLSEQNEEAGAPLSPLSEMPPWMGEVNPAQREGGVLGRGPW). Serine 128 carries the phosphoserine modification. Cysteine 129 and cysteine 145 form a disulfide bridge. The interval 146 to 150 (NSFRY) is important for degradation of atrial natriuretic peptide by IDE.

This sequence belongs to the natriuretic peptide family. Homodimer; disulfide-linked antiparallel dimer. In terms of processing, the precursor molecule is proteolytically cleaved by CORIN at Arg-122 to produce the atrial natriuretic peptide. Undergoes further proteolytic cleavage by unknown proteases to give rise to long-acting natriuretic peptide, vessel dilator and kaliuretic peptide. Additional processing gives rise to the auriculin and atriopeptin peptides. In the kidneys, alternative processing by an unknown protease results in the peptide urodilatin. Cleavage by MME initiates degradation of the factor and thereby regulates its activity. Degradation by IDE results in reduced activation of NPR1 (in vitro). During IDE degradation, the resulting products can temporarily stimulate NPR2 to produce cGMP, before the fragments are completely degraded and inactivated by IDE (in vitro). Post-translationally, degraded by IDE. In terms of processing, phosphorylation on Ser-128 decreases vasorelaxant activity.

It localises to the secreted. The protein localises to the perikaryon. The protein resides in the cell projection. Functionally, hormone that plays a key role in mediating cardio-renal homeostasis, and is involved in vascular remodeling and regulating energy metabolism. Acts by specifically binding and stimulating NPR1 to produce cGMP, which in turn activates effector proteins, such as PRKG1, that drive various biological responses. Regulates vasodilation, natriuresis, diuresis and aldosterone synthesis and is therefore essential for regulating blood pressure, controlling the extracellular fluid volume and maintaining the fluid-electrolyte balance. Also involved in inhibiting cardiac remodeling and cardiac hypertrophy by inducing cardiomyocyte apoptosis and attenuating the growth of cardiomyocytes and fibroblasts. Plays a role in female pregnancy by promoting trophoblast invasion and spiral artery remodeling in uterus, and thus prevents pregnancy-induced hypertension. In adipose tissue, acts in various cGMP- and PKG-dependent pathways to regulate lipid metabolism and energy homeostasis. This includes up-regulating lipid metabolism and mitochondrial oxygen utilization by activating the AMP-activated protein kinase (AMPK), and increasing energy expenditure by acting via MAPK11 to promote the UCP1-dependent thermogenesis of brown adipose tissue. Binds the clearance receptor NPR3 which removes the hormone from circulation. In terms of biological role, may have a role in cardio-renal homeostasis through regulation of natriuresis, diuresis, vasodilation, and inhibiting aldosterone synthesis. In vitro, promotes the production of cGMP and induces vasodilation. May promote natriuresis, at least in part, by enhancing prostaglandin E2 synthesis resulting in the inhibition of renal Na+-K+-ATPase. However reports on the involvement of this peptide in mammal blood volume and blood pressure homeostasis are conflicting; according to a report, in vivo it is not sufficient to activate cGMP and does not inhibit collecting duct transport nor effect diuresis and natriuresis. Appears to bind to specific receptors that are distinct from the receptors bound by atrial natriuretic peptide and vessel dilator. Possibly enhances protein excretion in urine by decreasing proximal tubular protein reabsorption. Its function is as follows. May have a role in cardio-renal homeostasis through regulation of natriuresis, diuresis, and vasodilation. In vitro, promotes the production of cGMP and induces vasodilation. May promote natriuresis, at least in part, by enhancing prostaglandin E2 synthesis resulting in the inhibition of renal Na+-K+-ATPase. However reports on the involvement of this peptide in mammal blood volume and blood pressure homeostasis are conflicting; according to a report it is not sufficient to activate cGMP and does not inhibit collecting duct transport nor effect diuresis and natriuresis. Appears to bind to specific receptors that are distinct from the receptors bound by the atrial natriuretic and long-acting natriuretic peptides. Possibly functions in protein excretion in urine by maintaining the integrity of the proximal tubules and enhancing protein excretion by decreasing proximal tubular protein reabsorption. May have a role in cardio-renal homeostasis through regulation of diuresis and inhibiting aldosterone synthesis. In vitro, promotes the production of cGMP and induces vasodilation. May promote natriuresis, at least in part, by enhancing prostaglandin E2 synthesis resulting in the inhibition of renal Na+-K+-ATPase. May have a role in potassium excretion but not sodium excretion (natriuresis). Possibly enhances protein excretion in urine by decreasing proximal tubular protein reabsorption. Functionally, hormone produced in the kidneys that appears to be important for maintaining cardio-renal homeostasis. Mediates vasodilation, natriuresis and diuresis primarily in the renal system, in order to maintain the extracellular fluid volume and control the fluid-electrolyte balance. Specifically binds and stimulates cGMP production by renal transmembrane receptors, likely NPR1. Urodilatin not ANP, may be the natriuretic peptide responsible for the regulation of sodium and water homeostasis in the kidney. In terms of biological role, may have a role in cardio-renal homeostasis through regulation of natriuresis and vasodilation. In vivo promotes natriuresis and in vitro, vasodilates renal artery strips. Its function is as follows. May have a role in cardio-renal homeostasis through regulation of regulation of natriuresis and vasodilation. In vivo promotes natriuresis. In vitro, vasodilates intestinal smooth muscle but not smooth muscle strips. May have a role in cardio-renal homeostasis through regulation of natriuresis and vasodilation. In vivo promotes natriuresis. In vitro, selectively vasodilates intestinal and vascular smooth muscle strips. Functionally, may have a role in cardio-renal homeostasis through regulation of natriuresis and vasodilation. In vivo promotes natriuresis. In vitro, selectively vasodilates intestinal smooth muscle but not vascular smooth muscle strips. This chain is Natriuretic peptides A (NPPA), found in Bos taurus (Bovine).